The following is a 58-amino-acid chain: Temporin-1Th (58 aa).

The N-terminal stretch at 1–22 (MFTLKKSLLLLFFLGTINLSLC) is a signal peptide. Residues 23 to 46 (EEERNAEEERRDEPDERDVQVEKR) constitute a propeptide that is removed on maturation. Residues 25-46 (ERNAEEERRDEPDERDVQVEKR) are disordered. At Leu56 the chain carries Leucine amide.

Expressed by the skin glands.

The protein resides in the secreted. Its function is as follows. Antimicrobial peptide that renders both the outer and inner membrane of bacteria permeable to hydrophobic substances of low molecular mass. The protein is Temporin-1Th of Rana temporaria (European common frog).